The following is a 410-amino-acid chain: Serine hydroxymethyltransferase (410 aa).

(6S)-5,6,7,8-tetrahydrofolate-binding positions include Leu116 and Gly120 to Leu122. Lys225 is subject to N6-(pyridoxal phosphate)lysine. Residue Ser349–Phe351 participates in (6S)-5,6,7,8-tetrahydrofolate binding.

It belongs to the SHMT family. Homodimer. Pyridoxal 5'-phosphate serves as cofactor.

The protein resides in the cytoplasm. It carries out the reaction (6R)-5,10-methylene-5,6,7,8-tetrahydrofolate + glycine + H2O = (6S)-5,6,7,8-tetrahydrofolate + L-serine. The protein operates within one-carbon metabolism; tetrahydrofolate interconversion. It participates in amino-acid biosynthesis; glycine biosynthesis; glycine from L-serine: step 1/1. In terms of biological role, catalyzes the reversible interconversion of serine and glycine with tetrahydrofolate (THF) serving as the one-carbon carrier. This reaction serves as the major source of one-carbon groups required for the biosynthesis of purines, thymidylate, methionine, and other important biomolecules. Also exhibits THF-independent aldolase activity toward beta-hydroxyamino acids, producing glycine and aldehydes, via a retro-aldol mechanism. This Leuconostoc mesenteroides subsp. mesenteroides (strain ATCC 8293 / DSM 20343 / BCRC 11652 / CCM 1803 / JCM 6124 / NCDO 523 / NBRC 100496 / NCIMB 8023 / NCTC 12954 / NRRL B-1118 / 37Y) protein is Serine hydroxymethyltransferase.